The chain runs to 178 residues: Peptide deformylase (178 aa).

Residues Cys96 and His138 each coordinate Fe cation. The active site involves Glu139. His142 serves as a coordination point for Fe cation.

This sequence belongs to the polypeptide deformylase family. Requires Fe(2+) as cofactor.

The enzyme catalyses N-terminal N-formyl-L-methionyl-[peptide] + H2O = N-terminal L-methionyl-[peptide] + formate. In terms of biological role, removes the formyl group from the N-terminal Met of newly synthesized proteins. Requires at least a dipeptide for an efficient rate of reaction. N-terminal L-methionine is a prerequisite for activity but the enzyme has broad specificity at other positions. This chain is Peptide deformylase, found in Bartonella tribocorum (strain CIP 105476 / IBS 506).